We begin with the raw amino-acid sequence, 129 residues long: Glycine cleavage system H protein (129 aa).

The 83-residue stretch at 24 to 106 (TYTVGITEHA…YAGGWIFKIK (83 aa)) folds into the Lipoyl-binding domain. N6-lipoyllysine is present on Lys-65.

Belongs to the GcvH family. The glycine cleavage system is composed of four proteins: P, T, L and H. (R)-lipoate serves as cofactor.

Functionally, the glycine cleavage system catalyzes the degradation of glycine. The H protein shuttles the methylamine group of glycine from the P protein to the T protein. In Citrobacter koseri (strain ATCC BAA-895 / CDC 4225-83 / SGSC4696), this protein is Glycine cleavage system H protein.